Consider the following 130-residue polypeptide: Small ribosomal subunit protein uS9 (130 aa).

It belongs to the universal ribosomal protein uS9 family.

The protein is Small ribosomal subunit protein uS9 (rpsI) of Geobacillus stearothermophilus (Bacillus stearothermophilus).